The primary structure comprises 124 residues: Small ribosomal subunit protein bS6 (124 aa).

Residues 105 to 115 (EVQHEEARKSA) show a composition bias toward basic and acidic residues. Residues 105–124 (EVQHEEARKSAQSDAPVAAA) are disordered.

The protein belongs to the bacterial ribosomal protein bS6 family.

Its function is as follows. Binds together with bS18 to 16S ribosomal RNA. The polypeptide is Small ribosomal subunit protein bS6 (Polynucleobacter necessarius subsp. necessarius (strain STIR1)).